The following is a 165-amino-acid chain: Large ribosomal subunit protein uL10 (165 aa).

The protein belongs to the universal ribosomal protein uL10 family. Part of the ribosomal stalk of the 50S ribosomal subunit. The N-terminus interacts with L11 and the large rRNA to form the base of the stalk. The C-terminus forms an elongated spine to which L12 dimers bind in a sequential fashion forming a multimeric L10(L12)X complex.

Its function is as follows. Forms part of the ribosomal stalk, playing a central role in the interaction of the ribosome with GTP-bound translation factors. The sequence is that of Large ribosomal subunit protein uL10 from Edwardsiella ictaluri (strain 93-146).